The following is a 478-amino-acid chain: Cytochrome P450 family 716 subfamily AD polypeptide 4 (478 aa).

A helical transmembrane segment spans residues 1–21 (MELFLPSVLLILTVFCFYYLF). Position 425 (C425) interacts with heme.

It belongs to the cytochrome P450 family. Heme serves as cofactor. Mainly expressed in petioles and, to a lower extent, in roots.

It is found in the membrane. It catalyses the reaction (1S,3bR,4R,5aR,9aR,9bR,11aS)-1-[(4R)-5-[(2S)-3,3-dimethyloxiran-2-yl]-1,4-dihydroxybutan-2-yl]-3b,6,6,9a,11a-pentamethyl-7-oxo-1H,2H,3bH,4H,5H,5aH,6H,7H,9aH,9bH,10H,11H,11aH-cyclopenta[a]phenanthren-4-yl acetate + reduced [NADPH--hemoprotein reductase] + O2 = (1S,3bR,4R,5aR,9aR,9bR,11aS)-1-(1-hydroxy-4-oxobutan-2-yl)-3b,6,6,9a,11a-pentamethyl-7-oxo-1H,2H,3bH,4H,5H,5aH,6H,7H,9aH,9bH,10H,11H,11aH-cyclopenta[a]phenanthren-4-yl acetate + 2-methylpropanoate + oxidized [NADPH--hemoprotein reductase] + H2O + 2 H(+). Its pathway is secondary metabolite biosynthesis; terpenoid biosynthesis. Its function is as follows. Monooxygenase involved in the biosynthesis of limonoids triterpene natural products such as azadirachtin, an antifeedant widely used as bioinsecticide, and possessing many medicinal applications including anti-tumoral, anti-malarial, anti-rheumatic, antibacterial, anti-inflammatory, anti-pyretic and diuretic effects. Catalyzes the formation of (1S,3bR,4R,5aR,9aR,9bR,11aS)-1-(1-hydroxy-4-oxobutan-2-yl)-3b,6,6,9a,11a-pentamethyl-7-oxo-1H,2H,3bH,4H,5H,5aH,6H,7H,9aH,9bH,10H,11H,11aH-cyclopenta[a]phenanthren-4-yl acetate. This Melia azedarach (Chinaberry tree) protein is Cytochrome P450 family 716 subfamily AD polypeptide 4.